The chain runs to 455 residues: Asparagine--tRNA ligase (455 aa).

The protein belongs to the class-II aminoacyl-tRNA synthetase family. In terms of assembly, homodimer.

It localises to the cytoplasm. The enzyme catalyses tRNA(Asn) + L-asparagine + ATP = L-asparaginyl-tRNA(Asn) + AMP + diphosphate + H(+). This is Asparagine--tRNA ligase from Mycoplasma pneumoniae (strain ATCC 29342 / M129 / Subtype 1) (Mycoplasmoides pneumoniae).